Here is a 361-residue protein sequence, read N- to C-terminus: Peptide chain release factor 1 (361 aa).

Gln235 carries the post-translational modification N5-methylglutamine. The segment at 288 to 307 (AAEAQTRKLQVGSGDRSQRI) is disordered.

Belongs to the prokaryotic/mitochondrial release factor family. Methylated by PrmC. Methylation increases the termination efficiency of RF1.

The protein resides in the cytoplasm. Peptide chain release factor 1 directs the termination of translation in response to the peptide chain termination codons UAG and UAA. This is Peptide chain release factor 1 from Xanthomonas axonopodis pv. citri (strain 306).